A 618-amino-acid chain; its full sequence is GMC oxidoreductase family protein Mala s 12 (618 aa).

Positions 1–23 (MKGIVSWAVVSAALVLSATESLA) are cleaved as a signal peptide. Val-129 and Val-280 together coordinate FAD. Residue His-556 is the Proton donor of the active site. The active-site Proton acceptor is His-599.

The protein belongs to the GMC oxidoreductase family. Monomer. The cofactor is FAD.

Its subcellular location is the secreted. This chain is GMC oxidoreductase family protein Mala s 12, found in Malassezia sympodialis (strain ATCC 42132) (Atopic eczema-associated yeast).